We begin with the raw amino-acid sequence, 267 residues long: L-aspartate dehydrogenase (267 aa).

Positions 124 and 190 each coordinate NAD(+). His-218 is a catalytic residue.

It belongs to the L-aspartate dehydrogenase family.

It carries out the reaction L-aspartate + NADP(+) + H2O = oxaloacetate + NH4(+) + NADPH + H(+). The catalysed reaction is L-aspartate + NAD(+) + H2O = oxaloacetate + NH4(+) + NADH + H(+). It functions in the pathway cofactor biosynthesis; NAD(+) biosynthesis; iminoaspartate from L-aspartate (dehydrogenase route): step 1/1. In terms of biological role, specifically catalyzes the NAD or NADP-dependent dehydrogenation of L-aspartate to iminoaspartate. This is L-aspartate dehydrogenase from Methanococcus maripaludis (strain C7 / ATCC BAA-1331).